The primary structure comprises 427 residues: Carboxyl-terminal-processing protease (427 aa).

The signal sequence occupies residues 1–31; the sequence is MGKRTRRFWALAFSLLMGALIYLGNTPSALA. The region spanning 104-186 is the PDZ domain; sequence NLQVTTTGEL…TKVSLEILSA (83 aa). Catalysis depends on charge relay system residues S313, D324, and K338.

This sequence belongs to the peptidase S41A family.

It localises to the cellular thylakoid lumen. It carries out the reaction The enzyme shows specific recognition of a C-terminal tripeptide, Xaa-Yaa-Zaa, in which Xaa is preferably Ala or Leu, Yaa is preferably Ala or Tyr, and Zaa is preferably Ala, but then cleaves at a variable distance from the C-terminus. A typical cleavage is -Ala-Ala-|-Arg-Ala-Ala-Lys-Glu-Asn-Tyr-Ala-Leu-Ala-Ala.. Functionally, cleavage of the 16 C-terminal residues from the D1 precursor of photosystem II (PSII). This proteolytic processing is necessary to allow the light-driven assembly of the oxygen-evolving cluster (a tetranuclear manganese), which is responsible for photosynthetic water oxidation. In Synechocystis sp. (strain ATCC 27184 / PCC 6803 / Kazusa), this protein is Carboxyl-terminal-processing protease (ctpA).